The chain runs to 146 residues: Anti-sigma F factor (146 aa).

This sequence belongs to the anti-sigma-factor family.

The catalysed reaction is L-seryl-[protein] + ATP = O-phospho-L-seryl-[protein] + ADP + H(+). It carries out the reaction L-threonyl-[protein] + ATP = O-phospho-L-threonyl-[protein] + ADP + H(+). Binds to sigma F and blocks its ability to form an RNA polymerase holoenzyme (E-sigma F). Phosphorylates SpoIIAA on a serine residue. This phosphorylation may enable SpoIIAA to act as an anti-anti-sigma factor that counteracts SpoIIAB and thus releases sigma F from inhibition. The sequence is that of Anti-sigma F factor from Bacillus cereus (strain G9842).